The sequence spans 307 residues: Ribosomal RNA small subunit methyltransferase H (307 aa).

S-adenosyl-L-methionine is bound by residues 32-34, aspartate 52, phenylalanine 78, aspartate 99, and glutamine 106; that span reads GGH.

It belongs to the methyltransferase superfamily. RsmH family.

It is found in the cytoplasm. The catalysed reaction is cytidine(1402) in 16S rRNA + S-adenosyl-L-methionine = N(4)-methylcytidine(1402) in 16S rRNA + S-adenosyl-L-homocysteine + H(+). In terms of biological role, specifically methylates the N4 position of cytidine in position 1402 (C1402) of 16S rRNA. This Caldicellulosiruptor saccharolyticus (strain ATCC 43494 / DSM 8903 / Tp8T 6331) protein is Ribosomal RNA small subunit methyltransferase H.